The following is a 176-amino-acid chain: Pro-glucagon (176 aa).

Residues 1 to 20 (MKSLYFVAGLLVMLAQGSWQ) form the signal peptide. Polar residues predominate over residues 25-35 (NTEEKSSSFPA). The disordered stretch occupies residues 25–59 (NTEEKSSSFPAPQTDPLGDPDQISEDKRHSQGTFT). At Ser54 the chain carries Phosphoserine. Residues 84–89 (NKNNIA) constitute a propeptide that is removed on maturation. Phosphoserine occurs at positions 105 and 108. The residue at position 127 (Arg127) is an Arginine amide. A propeptide spanning residues 131-145 (DFPEEVNIVEELRRR) is cleaved from the precursor. Phosphoserine is present on residues Ser150 and Ser152.

Belongs to the glucagon family. Proglucagon is post-translationally processed in a tissue-specific manner in pancreatic A cells and intestinal L cells. In pancreatic A cells, the major bioactive hormone is glucagon cleaved by PCSK2/PC2. In the intestinal L cells PCSK1/PC1 liberates GLP-1, GLP-2, glicentin and oxyntomodulin. GLP-1 is further N-terminally truncated by post-translational processing in the intestinal L cells resulting in GLP-1(7-37) GLP-1-(7-36)amide. The C-terminal amidation is neither important for the metabolism of GLP-1 nor for its effects on the endocrine pancreas. In terms of tissue distribution, glucagon is secreted in the A cells of the islets of Langerhans. GLP-1, GLP-2, oxyntomodulin and glicentin are secreted from enteroendocrine cells throughout the gastrointestinal tract. GLP-1 and GLP-2 are also secreted in selected neurons in the brain.

Its subcellular location is the secreted. Plays a key role in glucose metabolism and homeostasis. Regulates blood glucose by increasing gluconeogenesis and decreasing glycolysis. A counterregulatory hormone of insulin, raises plasma glucose levels in response to insulin-induced hypoglycemia. Plays an important role in initiating and maintaining hyperglycemic conditions in diabetes. In terms of biological role, potent stimulator of glucose-dependent insulin release. Also stimulates insulin release in response to IL6. Plays important roles on gastric motility and the suppression of plasma glucagon levels. May be involved in the suppression of satiety and stimulation of glucose disposal in peripheral tissues, independent of the actions of insulin. Has growth-promoting activities on intestinal epithelium. May also regulate the hypothalamic pituitary axis (HPA) via effects on LH, TSH, CRH, oxytocin, and vasopressin secretion. Increases islet mass through stimulation of islet neogenesis and pancreatic beta cell proliferation. Inhibits beta cell apoptosis. Its function is as follows. Stimulates intestinal growth and up-regulates villus height in the small intestine, concomitant with increased crypt cell proliferation and decreased enterocyte apoptosis. The gastrointestinal tract, from the stomach to the colon is the principal target for GLP-2 action. Plays a key role in nutrient homeostasis, enhancing nutrient assimilation through enhanced gastrointestinal function, as well as increasing nutrient disposal. Stimulates intestinal glucose transport and decreases mucosal permeability. Functionally, significantly reduces food intake. Inhibits gastric emptying in humans. Suppression of gastric emptying may lead to increased gastric distension, which may contribute to satiety by causing a sensation of fullness. May modulate gastric acid secretion and the gastro-pyloro-duodenal activity. May play an important role in intestinal mucosal growth in the early period of life. The chain is Pro-glucagon (GCG) from Ovis aries (Sheep).